The primary structure comprises 278 residues: Trehalose/maltose transport system permease protein MalG (278 aa).

Helical transmembrane passes span 12–32 (IIGA…MIVV), 74–94 (IIIA…AAYA), 106–126 (IPIF…GYLF), 141–161 (LYFP…LSYF), 186–206 (IILP…FIAA), and 242–262 (GSVM…ALLF). The ABC transmembrane type-1 domain occupies 70–262 (LKNSIIIASL…IPLVIMALLF (193 aa)).

This sequence belongs to the binding-protein-dependent transport system permease family. The complex is composed of two ATP-binding proteins (MalK), two transmembrane proteins (MalG and MalF) and a solute-binding protein (MalE).

The protein resides in the cell membrane. Its function is as follows. Part of the ABC transporter complex MalEFGK involved in trehalose/maltose import. Responsible for the translocation of the substrate across the membrane. The polypeptide is Trehalose/maltose transport system permease protein MalG (malG) (Thermococcus litoralis (strain ATCC 51850 / DSM 5473 / JCM 8560 / NS-C)).